We begin with the raw amino-acid sequence, 290 residues long: 4-hydroxy-tetrahydrodipicolinate synthase (290 aa).

A pyruvate-binding site is contributed by threonine 45. The active-site Proton donor/acceptor is tyrosine 133. Lysine 161 serves as the catalytic Schiff-base intermediate with substrate. Pyruvate is bound at residue isoleucine 203.

It belongs to the DapA family. In terms of assembly, homotetramer; dimer of dimers.

It is found in the cytoplasm. It catalyses the reaction L-aspartate 4-semialdehyde + pyruvate = (2S,4S)-4-hydroxy-2,3,4,5-tetrahydrodipicolinate + H2O + H(+). It functions in the pathway amino-acid biosynthesis; L-lysine biosynthesis via DAP pathway; (S)-tetrahydrodipicolinate from L-aspartate: step 3/4. Functionally, catalyzes the condensation of (S)-aspartate-beta-semialdehyde [(S)-ASA] and pyruvate to 4-hydroxy-tetrahydrodipicolinate (HTPA). The polypeptide is 4-hydroxy-tetrahydrodipicolinate synthase (Cellvibrio japonicus (strain Ueda107) (Pseudomonas fluorescens subsp. cellulosa)).